A 197-amino-acid chain; its full sequence is Probable nicotinate-nucleotide adenylyltransferase (197 aa).

Belongs to the NadD family.

It catalyses the reaction nicotinate beta-D-ribonucleotide + ATP + H(+) = deamido-NAD(+) + diphosphate. Its pathway is cofactor biosynthesis; NAD(+) biosynthesis; deamido-NAD(+) from nicotinate D-ribonucleotide: step 1/1. Functionally, catalyzes the reversible adenylation of nicotinate mononucleotide (NaMN) to nicotinic acid adenine dinucleotide (NaAD). The chain is Probable nicotinate-nucleotide adenylyltransferase from Porphyromonas gingivalis (strain ATCC 33277 / DSM 20709 / CIP 103683 / JCM 12257 / NCTC 11834 / 2561).